The sequence spans 371 residues: DNA replication and repair protein RecF (371 aa).

30 to 37 (GANAQGKT) lines the ATP pocket.

The protein belongs to the RecF family.

Its subcellular location is the cytoplasm. Functionally, the RecF protein is involved in DNA metabolism; it is required for DNA replication and normal SOS inducibility. RecF binds preferentially to single-stranded, linear DNA. It also seems to bind ATP. This Lacticaseibacillus casei (strain BL23) (Lactobacillus casei) protein is DNA replication and repair protein RecF.